A 253-amino-acid polypeptide reads, in one-letter code: 3-isopropylmalate dehydratase small subunit 3 (253 aa).

The N-terminal 56 residues, 1 to 56 (MATSQQFLNPTLFKSLASSNKNSCTLCPSPFLQLKSASTIFNYKPLTSSSATIITR), are a transit peptide targeting the chloroplast.

It belongs to the LeuD family. As to quaternary structure, heterodimer of the large LEUC/IIL1 subunit and the small LEUD (SSU1, SSU2 or SSU3) subunits. As to expression, expressed in vascular bundles of roots, cotyledons and rosette leaves. Expressed in stem vascular bundles which branche off into lateral inflorescences. Expressed in connective tissues in anthers. In hypocotyls, expressed in parenchyma cells surrounding the vasculature. In rosette leaves, expressed in phloem cells and cells close to the xylem along the vascular bundles. In roots of adult plants, expressed in cells closely associated with the stele. In flowering stalks, expressed in parenchyma cells associated with the phloem or the xylem.

Its subcellular location is the plastid. It is found in the chloroplast stroma. It catalyses the reaction (2R,3S)-3-isopropylmalate = (2S)-2-isopropylmalate. The catalysed reaction is a 2-(omega-methylsulfanyl)alkylmalate = a 2-(omega-methylsulfanyl)alkylmaleate + H2O. The enzyme catalyses 2-(3-methylsulfanyl)propylmalate = 2-(2-methylsulfanyl)propylmaleate + H2O. It carries out the reaction a 3-(omega-methylsulfanyl)alkylmalate = a 2-(omega-methylsulfanyl)alkylmaleate + H2O. It catalyses the reaction 2-(2-methylsulfanyl)ethylmalate = 2-(2-methylsulfanyl)ethylmaleate + H2O. The catalysed reaction is 3-(2-methylsulfanyl)ethylmalate = 2-(2-methylsulfanyl)ethylmaleate + H2O. The enzyme catalyses 3-(3-methylsulfanyl)propylmalate = 2-(2-methylsulfanyl)propylmaleate + H2O. Its pathway is amino-acid biosynthesis; L-leucine biosynthesis; L-leucine from 3-methyl-2-oxobutanoate: step 2/4. Catalyzes the isomerization between 2-isopropylmalate and 3-isopropylmalate, via the formation of 2-isopropylmaleate. Functions redundantly with LEUD1 in the methionine chain elongation pathway of aliphatic glucosinolate formation. In Arabidopsis thaliana (Mouse-ear cress), this protein is 3-isopropylmalate dehydratase small subunit 3.